We begin with the raw amino-acid sequence, 1025 residues long: Multidrug resistance protein MdtC (1025 aa).

12 helical membrane passes run 3–23, 333–353, 360–380, 387–407, 431–451, 463–483, 528–548, 853–873, 875–895, 897–917, 953–973, and 984–1004; these read FFALFIYRPVATILLSVAITL, EVEQTLIISVALVILVVFLFL, IIPAVAVPVSLIGTFAAMYLC, LSLMALTIATGFVVDDAIVVL, VGFTVLSMSLSLVAVFLPLLL, FAVTLSVAIGISLLVSLTLTP, LVGVVLLGTIALNIWLYISIP, VILIIAAIATVYIVLGILYES, VHPLTILSTLPSAGVGALLAL, LFNAPFSLIALIGIMLLIGIV, PIMMTTLAALFGALPLVLSGG, and ITIVGGLVMSQLLTLYTTPVV.

Belongs to the resistance-nodulation-cell division (RND) (TC 2.A.6) family. MdtC subfamily. Part of a tripartite efflux system composed of MdtA, MdtB and MdtC. MdtC forms a heteromultimer with MdtB.

The protein resides in the cell inner membrane. Its function is as follows. The MdtABC tripartite complex confers resistance against novobiocin and deoxycholate. This Escherichia coli (strain 55989 / EAEC) protein is Multidrug resistance protein MdtC.